The primary structure comprises 242 residues: Small ribosomal subunit protein uS3 (242 aa).

The KH type-2 domain maps to 39–109; that stretch reads IRQYVEKNLA…QIRINVIEVA (71 aa). The disordered stretch occupies residues 220 to 242; it reads VPAQAPRRQQRRRQQFEDRSSEG. The span at 233–242 shows a compositional bias: basic and acidic residues; it reads QQFEDRSSEG.

This sequence belongs to the universal ribosomal protein uS3 family. As to quaternary structure, part of the 30S ribosomal subunit. Forms a tight complex with proteins S10 and S14.

In terms of biological role, binds the lower part of the 30S subunit head. Binds mRNA in the 70S ribosome, positioning it for translation. This chain is Small ribosomal subunit protein uS3, found in Microcystis aeruginosa (strain NIES-843 / IAM M-2473).